Reading from the N-terminus, the 466-residue chain is Glutamate--tRNA ligase (466 aa).

A 'HIGH' region motif is present at residues 9-19; the sequence is PSPTGDLHVGS. Positions 237-241 match the 'KMSKS' region motif; the sequence is KLSKR. Position 240 (K240) interacts with ATP.

This sequence belongs to the class-I aminoacyl-tRNA synthetase family. Glutamate--tRNA ligase type 1 subfamily. As to quaternary structure, monomer.

It is found in the cytoplasm. It catalyses the reaction tRNA(Glu) + L-glutamate + ATP = L-glutamyl-tRNA(Glu) + AMP + diphosphate. Its function is as follows. Catalyzes the attachment of glutamate to tRNA(Glu) in a two-step reaction: glutamate is first activated by ATP to form Glu-AMP and then transferred to the acceptor end of tRNA(Glu). This is Glutamate--tRNA ligase from Baumannia cicadellinicola subsp. Homalodisca coagulata.